The following is a 452-amino-acid chain: Maltoporin (452 aa).

The signal sequence occupies residues Met-1–Ala-25.

This sequence belongs to the porin LamB (TC 1.B.3) family. Homotrimer formed of three 18-stranded antiparallel beta-barrels, containing three independent channels.

The protein localises to the cell outer membrane. It carries out the reaction beta-maltose(in) = beta-maltose(out). Involved in the transport of maltose and maltodextrins. This chain is Maltoporin, found in Salmonella heidelberg (strain SL476).